Reading from the N-terminus, the 38-residue chain is YTAKQCLQAIGSCGIAGTGAGAAGGPAGAFVGAXVVXI.

It localises to the secreted. In terms of biological role, bacteriocin active against Listeria monocytogenes, Pediococcus, Enterococcus, Lactobacilli and Bacilli. This is Bacteriocin curvaticin FS47 from Latilactobacillus curvatus (Lactobacillus curvatus).